An 89-amino-acid polypeptide reads, in one-letter code: MAEDDVVFVGNKPVMNYVLAVVTQFNSGAKEVRIMARGRAISRAVDVAEVSRSRFLGDVVVKDIKISTETLNTDRGETNVSAIEIVLGK.

This sequence belongs to the histone-like Alba family.

It localises to the cytoplasm. Its subcellular location is the chromosome. Binds double-stranded DNA tightly but without sequence specificity. Involved in DNA compaction. This Methanothrix thermoacetophila (strain DSM 6194 / JCM 14653 / NBRC 101360 / PT) (Methanosaeta thermophila) protein is DNA/RNA-binding protein Alba.